Consider the following 550-residue polypeptide: Cochlin (550 aa).

An N-terminal signal peptide occupies residues 1 to 24 (MWASWIPVLCLGVCLLLPPEPVGS). The 94-residue stretch at 28–121 (VPIPITCSTR…QMLSRWSASF (94 aa)) folds into the LCCL domain. Intrachain disulfides connect cysteine 34–cysteine 50 and cysteine 54–cysteine 74. The N-linked (GlcNAc...) asparagine glycan is linked to asparagine 100. Polar residues predominate over residues 128–139 (SGTQEATGQAVS). Residues 128 to 158 (SGTQEATGQAVSTAHPATGKRLKKTPEKKTG) are disordered. 2 consecutive VWFA domains span residues 165-350 (DIAF…VQKL) and 367-537 (NIAF…VSDV). N-linked (GlcNAc...) asparagine glycans are attached at residues asparagine 221 and asparagine 436.

Monomer. May form homodimer. Interacts with type II collagen. Interacts with SLC44A2. Interacts with ANXA2. In terms of processing, N-glycosylated.

The protein localises to the secreted. It localises to the extracellular space. In terms of biological role, plays a role in the control of cell shape and motility in the trabecular meshwork. The chain is Cochlin (COCH) from Bos taurus (Bovine).